The sequence spans 142 residues: Type IV pilus subunit protein TapA (142 aa).

The propeptide at 1 to 6 (MKKQSG) is leader sequence. At Phe-7 the chain carries N-methylphenylalanine. The chain crosses the membrane as a helical span at residues 7–27 (FTLIELMIVVAIVAILAAIAL).

The protein belongs to the N-Me-Phe pilin family.

The protein localises to the membrane. Its function is as follows. Major component of the type IV (TAP) pilus. Aeromonas hydrophila possesses two distinct families of type IV pili: the bundle-forming pilus (Bfp) and the type IV pilus (Tap). In Aeromonas hydrophila, this protein is Type IV pilus subunit protein TapA (tapA).